The primary structure comprises 421 residues: Glucose-1-phosphate adenylyltransferase (421 aa).

Alpha-D-glucose 1-phosphate is bound by residues Y109, G175, 190–191 (EK), and S208.

The protein belongs to the bacterial/plant glucose-1-phosphate adenylyltransferase family. Homotetramer.

The catalysed reaction is alpha-D-glucose 1-phosphate + ATP + H(+) = ADP-alpha-D-glucose + diphosphate. It functions in the pathway glycan biosynthesis; glycogen biosynthesis. Involved in the biosynthesis of ADP-glucose, a building block required for the elongation reactions to produce glycogen. Catalyzes the reaction between ATP and alpha-D-glucose 1-phosphate (G1P) to produce pyrophosphate and ADP-Glc. This Teredinibacter turnerae (strain ATCC 39867 / T7901) protein is Glucose-1-phosphate adenylyltransferase.